The following is a 176-amino-acid chain: MEITIVKGDITEQEVDVIVNAANSGLLGGGGVDGAIHQAAGPDLLKECQEVINRIGSCPAGEAVITSAGDLKATYIIHAVGPIWKDGEHQEANKLASCYWKALDLAAGKDLTSIAFPNISTGVYGFPKKLAAEVALYTVRKWAEEEYDTSIKEIRFVCFDEENLKLYNKLINSEVV.

The region spanning 1-175 (MEITIVKGDI…LYNKLINSEV (175 aa)) is the Macro domain.

The protein belongs to the MacroD-type family.

The sequence is that of Macro domain-containing protein lmo2759 from Listeria monocytogenes serovar 1/2a (strain ATCC BAA-679 / EGD-e).